The following is a 353-amino-acid chain: Methylthioribose-1-phosphate isomerase (353 aa).

Substrate is bound by residues 48–50 (RGA), Arg94, and Gln201. Catalysis depends on Asp242, which acts as the Proton donor. 252–253 (NK) provides a ligand contact to substrate.

It belongs to the eIF-2B alpha/beta/delta subunits family. MtnA subfamily.

The catalysed reaction is 5-(methylsulfanyl)-alpha-D-ribose 1-phosphate = 5-(methylsulfanyl)-D-ribulose 1-phosphate. It functions in the pathway amino-acid biosynthesis; L-methionine biosynthesis via salvage pathway; L-methionine from S-methyl-5-thio-alpha-D-ribose 1-phosphate: step 1/6. In terms of biological role, catalyzes the interconversion of methylthioribose-1-phosphate (MTR-1-P) into methylthioribulose-1-phosphate (MTRu-1-P). This is Methylthioribose-1-phosphate isomerase from Roseiflexus sp. (strain RS-1).